Consider the following 638-residue polypeptide: XK-related protein 6 (638 aa).

Disordered stretches follow at residues 24–43 (VGSGEEDGEPGGGGCGGGDG) and 82–117 (RSAAAADGGDQPLQPPGAAGRHPPTPSAGRPQPASP). The segment covering 33–43 (PGGGGCGGGDG) has biased composition (gly residues). Transmembrane regions (helical) follow at residues 127–147 (LWIVLALLVFFGDVGTDLWLA), 158–178 (CFGLTLFFVLVPSLLVQSLSF), 315–335 (TLPCVSSVTSLMSLAWVLASY), 369–389 (VISFALFASIFQLYFGIFVVV), 410–430 (WEEILFNMVVGIVYIFCWFNV), 439–459 (MFAYYTIVLTENAALTFLWYF), and 470–490 (AVPALCCVFVSFVAGITLMLL).

The protein belongs to the XK family.

Its subcellular location is the cell membrane. This is XK-related protein 6 from Mus musculus (Mouse).